Here is a 536-residue protein sequence, read N- to C-terminus: Thiamine transport system permease protein ThiP (536 aa).

12 helical membrane-spanning segments follow: residues 16 to 36 (GLCA…ALWL), 58 to 78 (FSFW…VFLA), 95 to 115 (LCAM…LSVY), 134 to 154 (FSPY…LPMA), 199 to 219 (VAAL…SLGG), 240 to 260 (PARA…LVLL), 291 to 311 (DALL…AVVV), 334 to 354 (SLRI…MLLW), 373 to 393 (LSGM…FFLL), 404 to 424 (ADGI…LKVL), 463 to 483 (AQAL…VALF), and 506 to 526 (DGAV…TLIE). One can recognise an ABC transmembrane type-1 1 domain in the interval 56–261 (VRFSFWQAFL…VCCLALVLLS (206 aa)). Residues 331-525 (VWTSLRIALA…LLCFTLFTLI (195 aa)) form the ABC transmembrane type-1 2 domain.

This sequence belongs to the binding-protein-dependent transport system permease family. As to quaternary structure, the complex is composed of two ATP-binding proteins (ThiQ), two transmembrane proteins (ThiP) and a solute-binding protein (ThiB).

The protein resides in the cell inner membrane. Its function is as follows. Part of the ABC transporter complex ThiBPQ involved in thiamine import. Probably responsible for the translocation of the substrate across the membrane. Is also involved in thiamine pyrophosphate transport. This is Thiamine transport system permease protein ThiP from Salmonella typhimurium (strain LT2 / SGSC1412 / ATCC 700720).